A 135-amino-acid chain; its full sequence is Nucleoside diphosphate kinase (135 aa).

Positions 11, 59, 87, 93, 104, and 114 each coordinate ATP. H117 acts as the Pros-phosphohistidine intermediate in catalysis.

This sequence belongs to the NDK family. Homotetramer. Mg(2+) serves as cofactor.

The protein localises to the cytoplasm. It carries out the reaction a 2'-deoxyribonucleoside 5'-diphosphate + ATP = a 2'-deoxyribonucleoside 5'-triphosphate + ADP. The enzyme catalyses a ribonucleoside 5'-diphosphate + ATP = a ribonucleoside 5'-triphosphate + ADP. Functionally, major role in the synthesis of nucleoside triphosphates other than ATP. The ATP gamma phosphate is transferred to the NDP beta phosphate via a ping-pong mechanism, using a phosphorylated active-site intermediate. The protein is Nucleoside diphosphate kinase of Marinomonas sp. (strain MWYL1).